Consider the following 433-residue polypeptide: 3-phosphoshikimate 1-carboxyvinyltransferase (433 aa).

Residues Lys22, Ser23, and Arg27 each coordinate 3-phosphoshikimate. Residue Lys22 coordinates phosphoenolpyruvate. Gly95 and Arg123 together coordinate phosphoenolpyruvate. Residues Ser167, Gln169, Asp315, and Lys342 each contribute to the 3-phosphoshikimate site. Gln169 serves as a coordination point for phosphoenolpyruvate. The Proton acceptor role is filled by Asp315. The phosphoenolpyruvate site is built by Arg346 and Arg387.

Belongs to the EPSP synthase family. As to quaternary structure, monomer.

The protein localises to the cytoplasm. The catalysed reaction is 3-phosphoshikimate + phosphoenolpyruvate = 5-O-(1-carboxyvinyl)-3-phosphoshikimate + phosphate. Its pathway is metabolic intermediate biosynthesis; chorismate biosynthesis; chorismate from D-erythrose 4-phosphate and phosphoenolpyruvate: step 6/7. Functionally, catalyzes the transfer of the enolpyruvyl moiety of phosphoenolpyruvate (PEP) to the 5-hydroxyl of shikimate-3-phosphate (S3P) to produce enolpyruvyl shikimate-3-phosphate and inorganic phosphate. The sequence is that of 3-phosphoshikimate 1-carboxyvinyltransferase from Legionella pneumophila (strain Paris).